A 505-amino-acid chain; its full sequence is L-carnitine/gamma-butyrobetaine antiporter (505 aa).

Helical transmembrane passes span 10–30 (IEPK…WLTV), 50–70 (IWGW…FWLV), 92–112 (IFMM…SIEI), 143–163 (GPLP…FFFV), 195–215 (FYLV…TPLV), 231–251 (LDAI…ACGL), 263–283 (SYLS…SFIM), 316–336 (WTVF…IFLA), 347–367 (LCFG…TVLG), 403–423 (FSTA…VTLI), 446–466 (LLVR…LLAL), and 475–495 (AIIA…LSFI).

The protein belongs to the BCCT transporter (TC 2.A.15) family. CaiT subfamily. As to quaternary structure, homotrimer.

Its subcellular location is the cell inner membrane. It catalyses the reaction 4-(trimethylamino)butanoate(in) + (R)-carnitine(out) = 4-(trimethylamino)butanoate(out) + (R)-carnitine(in). It functions in the pathway amine and polyamine metabolism; carnitine metabolism. Catalyzes the exchange of L-carnitine for gamma-butyrobetaine. The polypeptide is L-carnitine/gamma-butyrobetaine antiporter (Citrobacter koseri (strain ATCC BAA-895 / CDC 4225-83 / SGSC4696)).